The sequence spans 424 residues: Histidine--tRNA ligase (424 aa).

This sequence belongs to the class-II aminoacyl-tRNA synthetase family. As to quaternary structure, homodimer.

The protein localises to the cytoplasm. It carries out the reaction tRNA(His) + L-histidine + ATP = L-histidyl-tRNA(His) + AMP + diphosphate + H(+). This is Histidine--tRNA ligase from Klebsiella pneumoniae (strain 342).